The primary structure comprises 105 residues: Small ribosomal subunit protein uS10 (105 aa).

The protein belongs to the universal ribosomal protein uS10 family. Part of the 30S ribosomal subunit.

Its function is as follows. Involved in the binding of tRNA to the ribosomes. The chain is Small ribosomal subunit protein uS10 from Oleidesulfovibrio alaskensis (strain ATCC BAA-1058 / DSM 17464 / G20) (Desulfovibrio alaskensis).